The sequence spans 1071 residues: ATP-dependent helicase/deoxyribonuclease subunit B (1071 aa).

It belongs to the helicase family. AddB/RexB type 2 subfamily. As to quaternary structure, heterodimer of AddA and RexB. The cofactor is Mg(2+).

Functionally, the heterodimer acts as both an ATP-dependent DNA helicase and an ATP-dependent, dual-direction single-stranded exonuclease. Recognizes the chi site generating a DNA molecule suitable for the initiation of homologous recombination. This subunit has 5' -&gt; 3' nuclease activity but not helicase activity. The polypeptide is ATP-dependent helicase/deoxyribonuclease subunit B (Streptococcus pyogenes serotype M3 (strain ATCC BAA-595 / MGAS315)).